The following is a 297-amino-acid chain: Undecaprenyl-diphosphatase (297 aa).

7 helical membrane passes run 39-59, 85-105, 113-133, 151-171, 190-210, 220-240, and 249-269; these read PGAA…LIYF, ARLA…GLTL, FRSL…LLVV, GILI…RSGT, SFLL…KHLL, ALWV…AWLL, and LVFV…LQTG.

The protein belongs to the UppP family.

It localises to the cell inner membrane. The enzyme catalyses di-trans,octa-cis-undecaprenyl diphosphate + H2O = di-trans,octa-cis-undecaprenyl phosphate + phosphate + H(+). Its function is as follows. Catalyzes the dephosphorylation of undecaprenyl diphosphate (UPP). Confers resistance to bacitracin. In Myxococcus xanthus (strain DK1622), this protein is Undecaprenyl-diphosphatase.